A 239-amino-acid polypeptide reads, in one-letter code: UDP-2,3-diacylglucosamine hydrolase (239 aa).

Mn(2+) is bound by residues aspartate 8, histidine 10, aspartate 41, asparagine 78, and histidine 113. 78-79 (NR) is a substrate binding site. Substrate contacts are provided by aspartate 121, serine 159, asparagine 163, lysine 166, and histidine 194. The Mn(2+) site is built by histidine 194 and histidine 196.

It belongs to the LpxH family. Mn(2+) serves as cofactor.

It is found in the cell inner membrane. It catalyses the reaction UDP-2-N,3-O-bis[(3R)-3-hydroxytetradecanoyl]-alpha-D-glucosamine + H2O = 2-N,3-O-bis[(3R)-3-hydroxytetradecanoyl]-alpha-D-glucosaminyl 1-phosphate + UMP + 2 H(+). It participates in glycolipid biosynthesis; lipid IV(A) biosynthesis; lipid IV(A) from (3R)-3-hydroxytetradecanoyl-[acyl-carrier-protein] and UDP-N-acetyl-alpha-D-glucosamine: step 4/6. Functionally, hydrolyzes the pyrophosphate bond of UDP-2,3-diacylglucosamine to yield 2,3-diacylglucosamine 1-phosphate (lipid X) and UMP by catalyzing the attack of water at the alpha-P atom. Involved in the biosynthesis of lipid A, a phosphorylated glycolipid that anchors the lipopolysaccharide to the outer membrane of the cell. This chain is UDP-2,3-diacylglucosamine hydrolase, found in Shewanella sp. (strain MR-4).